We begin with the raw amino-acid sequence, 307 residues long: Elongation factor Ts (307 aa).

The involved in Mg(2+) ion dislocation from EF-Tu stretch occupies residues 80 to 83 (TDFV).

Belongs to the EF-Ts family.

The protein resides in the cytoplasm. Functionally, associates with the EF-Tu.GDP complex and induces the exchange of GDP to GTP. It remains bound to the aminoacyl-tRNA.EF-Tu.GTP complex up to the GTP hydrolysis stage on the ribosome. The sequence is that of Elongation factor Ts from Azorhizobium caulinodans (strain ATCC 43989 / DSM 5975 / JCM 20966 / LMG 6465 / NBRC 14845 / NCIMB 13405 / ORS 571).